We begin with the raw amino-acid sequence, 72 residues long: Translation initiation factor IF-1 (72 aa).

The region spanning 1-72 is the S1-like domain; sequence MAKDDVIEID…DKGRITFRYK (72 aa).

Belongs to the IF-1 family. Component of the 30S ribosomal translation pre-initiation complex which assembles on the 30S ribosome in the order IF-2 and IF-3, IF-1 and N-formylmethionyl-tRNA(fMet); mRNA recruitment can occur at any time during PIC assembly.

The protein localises to the cytoplasm. One of the essential components for the initiation of protein synthesis. Stabilizes the binding of IF-2 and IF-3 on the 30S subunit to which N-formylmethionyl-tRNA(fMet) subsequently binds. Helps modulate mRNA selection, yielding the 30S pre-initiation complex (PIC). Upon addition of the 50S ribosomal subunit IF-1, IF-2 and IF-3 are released leaving the mature 70S translation initiation complex. The protein is Translation initiation factor IF-1 of Sulfurovum sp. (strain NBC37-1).